Consider the following 88-residue polypeptide: Small ribosomal subunit protein uS15c (88 aa).

Belongs to the universal ribosomal protein uS15 family. Part of the 30S ribosomal subunit.

It is found in the plastid. The protein localises to the chloroplast. This is Small ribosomal subunit protein uS15c (rps15) from Pinus thunbergii (Japanese black pine).